The chain runs to 393 residues: Trehalose import ATP-binding protein SugC (393 aa).

An ABC transporter domain is found at 4–235; sequence IVLDHVNKSY…PANLFVAGFI (232 aa). Position 37 to 44 (37 to 44) interacts with ATP; sequence GPSGCGKT. The Helical C-loop; LSGGQ motif signature appears at 135–139; that stretch reads LSGGQ.

The protein belongs to the ABC transporter superfamily. Monomer. Homodimerizes in the presence of ATP. The complex is composed of two ATP-binding proteins (SugC), two transmembrane proteins (SugA and SugB) and a solute-binding protein (LpqY).

It is found in the cell inner membrane. The enzyme catalyses alpha,alpha-trehalose(out) + ATP + H2O = alpha,alpha-trehalose(in) + ADP + phosphate + H(+). Part of the ABC transporter complex LpqY-SugA-SugB-SugC, which is highly specific for uptake of trehalose. Involved in the recycling of extracellular trehalose released from trehalose-containing molecules synthesized by M.tuberculosis. Trehalose uptake is essential for virulence. Responsible for energy coupling to the transport system. The polypeptide is Trehalose import ATP-binding protein SugC (sugC) (Mycobacterium tuberculosis (strain CDC 1551 / Oshkosh)).